Consider the following 317-residue polypeptide: MDFKIFLFLTAIFMIVGVTVSTATTNPTAPRAYRPRINTTAGVCELEVPIVNILPPELKHTAHTIRGNGSAPGFSKIKICCSGYKIVAHTPFHCTPDCPSGCGLGNCTAPNVCTCNKGAGFGPDGKCISVCPGRCLNGQCYGNFCNCNSGFVLEPNGRYCTGGCTRNCGPGGQCVGNNQCSCLSGFALNSQGTCQMICAPGFQQMGSACEPLCPKGCVNGECVAPGQCRCKSGYALNSSKVCAPKCSQPCYNGFCSAPNVCTCKEGYIKDATSRNGNRCIAYCAAGCPNGTCSAPNFCICKQGYIKQSKGSNVCVKQ.

The first 23 residues, 1–23 (MDFKIFLFLTAIFMIVGVTVSTA), serve as a signal peptide directing secretion. Positions 24-33 (TTNPTAPRAY) are may be required for E.coli agglutination activity. EGF-like domains lie at 93–128 (HCTP…GKCI), 130–161 (VCPG…RYCT), 163–195 (GCTR…GTCQ), 208–243 (ACEP…KVCA), 245–280 (KCSQ…NRCI), and 282–315 (YCAA…NVCV). 18 cysteine pairs are disulfide-bonded: cysteine 98–cysteine 107, cysteine 102–cysteine 113, cysteine 115–cysteine 127, cysteine 131–cysteine 140, cysteine 135–cysteine 145, cysteine 147–cysteine 160, cysteine 164–cysteine 174, cysteine 168–cysteine 180, cysteine 182–cysteine 194, cysteine 213–cysteine 222, cysteine 217–cysteine 228, cysteine 230–cysteine 242, cysteine 246–cysteine 255, cysteine 250–cysteine 261, cysteine 263–cysteine 279, cysteine 283–cysteine 292, cysteine 287–cysteine 298, and cysteine 300–cysteine 314.

Its subcellular location is the secreted. Functionally, binds to lipopolysaccharides (LPS) present on the cell walls of Gram-negative bacteria, behaving as a pattern recognition receptor (PRR). Induces bacterial aggregation and enhances their subsequent clearance by the innate immune response. Binds to the inner core oligosaccharides region of rough-type bacterial LPS. Displays activity against the Gram-negative bacterium E.coli. Does not display any activity against the Gram-positive bacterium S.aureus or the fungi C.albicans. This Holotrichia diomphalia (Korean black chafer) protein is Epidermal growth factor-like protein.